The primary structure comprises 63 residues: Bowman-Birk type proteinase inhibitor (63 aa).

7 disulfide bridges follow: C8/C61, C9/C24, C12/C57, C14/C22, C31/C38, C35/C50, and C40/C48.

The protein belongs to the Bowman-Birk serine protease inhibitor family.

Its function is as follows. This inhibitor has two domains, each with separate antiprotease activity. Inhibits bovine trypsin and chymotrypsin, in a molar ratio of 1:1. The trypsin inhibition of FBI is independent of chymotrypsin inhibition, but the chymotrypsin inhibition is not completely independent of trypsin inhibition. The sequence is that of Bowman-Birk type proteinase inhibitor from Vicia faba (Broad bean).